The following is a 239-amino-acid chain: MEEIRAWRHVFKLDPNKPIDDERLERLCESGTDAVIVGGTDGVTLDGVLDLLARIRRFSVPCALEVTDIEALTPGFDAYLIPMVLNSCRVDWVIGRHHEAVKQYGDVMNWDEIFAEGYCILNGECKAAKLTEANTALDDDDVVAYARLAEHLYKLPIFYLEYSGTYGNPSLVEKVKRALSRTQLVYGGGIMTPEQAAEMARYADTVVVGNAVYDSFESALATVEAVKRIDGENEISGVK.

Lys-12 lines the sn-glycerol 1-phosphate pocket. Asp-14 and Thr-40 together coordinate Mg(2+). Residues 159–164 (YLEYSG), Gly-189, and 209–210 (GN) contribute to the sn-glycerol 1-phosphate site.

It belongs to the GGGP/HepGP synthase family. Group I subfamily. In terms of assembly, homodimer. Requires Mg(2+) as cofactor.

The enzyme catalyses sn-glycerol 1-phosphate + all-trans-heptaprenyl diphosphate = 3-heptaprenyl-sn-glycero-1-phosphate + diphosphate. Its pathway is membrane lipid metabolism; glycerophospholipid metabolism. Functionally, prenyltransferase that catalyzes in vivo the transfer of the heptaprenyl moiety of heptaprenyl pyrophosphate (HepPP; 35 carbon atoms) to the C3 hydroxyl of sn-glycerol-1-phosphate (G1P), producing heptaprenylglyceryl phosphate (HepGP). This reaction is an ether-bond-formation step in the biosynthesis of archaea-type G1P-based membrane lipids found in Bacillales. In Geobacillus thermodenitrificans (strain NG80-2), this protein is Heptaprenylglyceryl phosphate synthase.